The primary structure comprises 338 residues: Envelope glycoprotein K (338 aa).

Residues 1 to 30 (MLAVRSLQHLSTVVLITAYGLVLVWYTVFG) form the signal peptide. Over 31–121 (ASPLHRCIYA…VNCLETLWYT (91 aa)) the chain is Extracellular. Residues 31-121 (ASPLHRCIYA…VNCLETLWYT (91 aa)) form an involved in fusion region. N-linked (GlcNAc...) asparagine; by host glycans are attached at residues N48 and N58. The helical transmembrane segment at 122–140 (RVRLVVVGWFLYLAFVALH) threads the bilayer. At 141–212 (QRRCMFGVVS…DPVTFLYHRP (72 aa)) the chain is on the cytoplasmic side. The chain crosses the membrane as a helical span at residues 213 to 233 (AIGVIVGCELIVRFVAVGLIV). The Extracellular segment spans residues 234–243 (GTAFISRGAC). The helical transmembrane segment at 244–264 (AITYPLFLTITTWCFVSTIGL) threads the bilayer. At 265 to 301 (TELYCILRRGPAPKNADKAAAPGRSKGLSGVCGRCCS) the chain is on the cytoplasmic side. The interaction with UL20 stretch occupies residues 265–301 (TELYCILRRGPAPKNADKAAAPGRSKGLSGVCGRCCS). Residues 302–322 (IILSGIAMRLCYIAVVAGVVL) form a helical membrane-spanning segment. Over 323-338 (VALHYEQEIQRRLFDV) the chain is Extracellular.

This sequence belongs to the alphaherpesvirinae glycoprotein K family. Interacts (via UL20 interaction region) with protein UL20 (via N-terminus); this interaction probably plays a role in the coordinate transport of protein UL20 and gK to the trans-Golgi network (TGN), and is required for the cell surface expression of gK. Post-translationally, N-glycosylated.

The protein resides in the host cell membrane. It localises to the host endosome membrane. It is found in the host Golgi apparatus membrane. Glycoprotein that probably modulates membrane fusion events during secondary envelopment of cytoplasmic capsids that bud into specific trans-Golgi network (TGN)-derived membranes. Also plays a role, together with gB, in virus-induced cell-to-cell fusion (syncytia formation). Seems to block fusion of virions with infected-cell membranes. The polypeptide is Envelope glycoprotein K (gK) (Homo sapiens (Human)).